A 223-amino-acid polypeptide reads, in one-letter code: Ras-related protein RABA4c (223 aa).

22-29 (GDSAVGKS) is a binding site for GTP. Residues 44–52 (SKATIGVEF) carry the Effector region motif. GTP contacts are provided by residues 70-74 (DTAGQ), 128-131 (NKTD), and 158-159 (SA). Residues cysteine 219 and cysteine 220 are each lipidated (S-geranylgeranyl cysteine).

It belongs to the small GTPase superfamily. Rab family.

The protein resides in the cell membrane. In terms of biological role, intracellular vesicle trafficking and protein transport. The chain is Ras-related protein RABA4c (RABA4C) from Arabidopsis thaliana (Mouse-ear cress).